We begin with the raw amino-acid sequence, 372 residues long: tRNA-specific 2-thiouridylase MnmA 1 (372 aa).

ATP contacts are provided by residues alanine 26 to serine 33 and methionine 52. Cysteine 118 serves as the catalytic Nucleophile. Cysteines 118 and 214 form a disulfide. Glycine 142 serves as a coordination point for ATP. An interaction with tRNA region spans residues lysine 164–glutamine 166. Cysteine 214 (cysteine persulfide intermediate) is an active-site residue.

The protein belongs to the MnmA/TRMU family.

It localises to the cytoplasm. The catalysed reaction is S-sulfanyl-L-cysteinyl-[protein] + uridine(34) in tRNA + AH2 + ATP = 2-thiouridine(34) in tRNA + L-cysteinyl-[protein] + A + AMP + diphosphate + H(+). Its function is as follows. Catalyzes the 2-thiolation of uridine at the wobble position (U34) of tRNA, leading to the formation of s(2)U34. This chain is tRNA-specific 2-thiouridylase MnmA 1, found in Syntrophus aciditrophicus (strain SB).